A 384-amino-acid chain; its full sequence is Lipid-A-disaccharide synthase (384 aa).

This sequence belongs to the LpxB family.

It catalyses the reaction a lipid X + a UDP-2-N,3-O-bis[(3R)-3-hydroxyacyl]-alpha-D-glucosamine = a lipid A disaccharide + UDP + H(+). It functions in the pathway bacterial outer membrane biogenesis; LPS lipid A biosynthesis. Functionally, condensation of UDP-2,3-diacylglucosamine and 2,3-diacylglucosamine-1-phosphate to form lipid A disaccharide, a precursor of lipid A, a phosphorylated glycolipid that anchors the lipopolysaccharide to the outer membrane of the cell. The chain is Lipid-A-disaccharide synthase from Neisseria meningitidis serogroup C / serotype 2a (strain ATCC 700532 / DSM 15464 / FAM18).